Consider the following 32-residue polypeptide: Ranatuerin-2BYa (32 aa).

C27 and C32 form a disulfide bridge.

As to expression, expressed by the skin glands.

It is found in the secreted. In terms of biological role, antibacterial activity against Gram-positive bacterium S.aureus and Gram-negative bacterium E.coli. Weak hemolytic activity. In Rana boylii (Foothill yellow-legged frog), this protein is Ranatuerin-2BYa.